The sequence spans 595 residues: Aspartate--tRNA(Asp/Asn) ligase (595 aa).

Glu171 contacts L-aspartate. The tract at residues 195 to 198 (QLFK) is aspartate. Residue Arg217 coordinates L-aspartate. ATP-binding positions include 217 to 219 (RDE) and Gln226. His454 serves as a coordination point for L-aspartate. An ATP-binding site is contributed by Glu488. Arg495 is a binding site for L-aspartate. 540 to 543 (GLDR) provides a ligand contact to ATP.

It belongs to the class-II aminoacyl-tRNA synthetase family. Type 1 subfamily. Homodimer.

The protein resides in the cytoplasm. The catalysed reaction is tRNA(Asx) + L-aspartate + ATP = L-aspartyl-tRNA(Asx) + AMP + diphosphate. Its function is as follows. Aspartyl-tRNA synthetase with relaxed tRNA specificity since it is able to aspartylate not only its cognate tRNA(Asp) but also tRNA(Asn). Reaction proceeds in two steps: L-aspartate is first activated by ATP to form Asp-AMP and then transferred to the acceptor end of tRNA(Asp/Asn). This is Aspartate--tRNA(Asp/Asn) ligase from Bordetella petrii (strain ATCC BAA-461 / DSM 12804 / CCUG 43448).